The chain runs to 279 residues: uncharacterized protein (279 aa).

Belongs to the PhzF family.

This is an uncharacterized protein from Vibrio cholerae serotype O1 (strain ATCC 39315 / El Tor Inaba N16961).